Reading from the N-terminus, the 800-residue chain is General transcription and DNA repair factor IIH helicase/translocase subunit XPB (800 aa).

A disordered region spans residues methionine 1–threonine 27. Residues glycine 17–threonine 27 show a composition bias toward polar residues. Positions methionine 329–leucine 491 constitute a Helicase ATP-binding domain. Residue leucine 342 to serine 349 coordinates ATP. Residues aspartate 444–histidine 447 carry the DEVH box motif. Positions arginine 546 to asparagine 704 constitute a Helicase C-terminal domain. Residues glycine 743 to asparagine 769 form a disordered region. Positions serine 749–alanine 764 are enriched in polar residues.

Belongs to the helicase family. RAD25/XPB subfamily. Component of the 7-subunit TFIIH core complex composed of XPB/repB, XPD/repD, gtf2h1, gtf2h2, gtf2h3, gtf2h4 and gtf2h5, which is active in NER. The core complex associates with the 3-subunit CDK-activating kinase (CAK) module composed of cycH/cyclin H, cdk7 and mnat1 to form the 10-subunit holoenzyme (holo-TFIIH) active in transcription.

Its subcellular location is the nucleus. The enzyme catalyses Couples ATP hydrolysis with the unwinding of duplex DNA by translocating in the 3'-5' direction.. The catalysed reaction is ATP + H2O = ADP + phosphate + H(+). Its function is as follows. ATP-dependent 3'-5' DNA helicase/translocase; binds dsDNA rather than ssDNA, unzipping it in a translocase rather than classical helicase activity. Component of the general transcription and DNA repair factor IIH (TFIIH) core complex. When complexed to CDK-activating kinase (CAK), involved in RNA transcription by RNA polymerase II. The ATPase activity of XPB/ERCC3, but not its helicase activity, is required for DNA opening; it may wrap around the damaged DNA wedging it open, causing localized melting and twisting that allows XPD/ERCC2 helicase to anchor. The ATP-dependent helicase activity of XPB/ERCC3 may be required for promoter escape. Also involved in transcription-coupled nucleotide excision repair (NER) of damaged DNA. In NER, TFIIH acts by opening DNA around the lesion to allow the excision of the damaged oligonucleotide and its replacement by a new DNA fragment. The structure of the TFIIH transcription complex differs from the NER-TFIIH complex. The sequence is that of General transcription and DNA repair factor IIH helicase/translocase subunit XPB from Dictyostelium discoideum (Social amoeba).